A 481-amino-acid polypeptide reads, in one-letter code: UDP-glycosyltransferase 85A2 (481 aa).

UDP-alpha-D-glucose-binding positions include Ser-303, 360 to 362 (CPQ), 377 to 385 (HCGWNSTLE), and 399 to 402 (FAEQ).

Belongs to the UDP-glycosyltransferase family. In terms of tissue distribution, expressed in roots, shoots, leaves and flowers.

This is UDP-glycosyltransferase 85A2 (UGT85A2) from Arabidopsis thaliana (Mouse-ear cress).